The sequence spans 329 residues: Probable alpha-1,2-galactosyltransferase gmh1 (329 aa).

Residues 1 to 14 (MLSFFTKNTLTKRK) lie on the Cytoplasmic side of the membrane. Residues 15–35 (LIMLALAIVFTFFAFGLYFIP) form a helical; Signal-anchor for type II membrane protein membrane-spanning segment. Over 36–329 (HDEISVFDFK…LWTKYKDKII (294 aa)) the chain is Lumenal. Residues asparagine 127 and asparagine 169 are each glycosylated (N-linked (GlcNAc...) asparagine).

The protein belongs to the glycosyltransferase 34 family.

The protein resides in the golgi apparatus membrane. This Schizosaccharomyces pombe (strain 972 / ATCC 24843) (Fission yeast) protein is Probable alpha-1,2-galactosyltransferase gmh1 (gmh1).